Consider the following 767-residue polypeptide: E3 ubiquitin-protein ligase pub1 (767 aa).

Residues 1–111 form the C2 domain; that stretch reads MSNSAQSRRI…AIGGDEMLTR (111 aa). The span at 138 to 158 shows a compositional bias: polar residues; the sequence is LQVPSSAASGARTQRTSITND. 2 disordered regions span residues 138–216 and 252–306; these read LQVP…RRTD and SASS…RPYF. Residue Thr156 is modified to Phosphothreonine. Low complexity predominate over residues 159–176; sequence PQSSQSSSVSRNPASSRA. Phosphoserine is present on Ser178. Phosphothreonine is present on Thr180. Residues 184 to 194 show a composition bias toward low complexity; the sequence is APAASPASSEP. A WW 1 domain is found at 211-236; that stretch reads WERRTDNLGRTYYVDHNTRSTTWIRP. Over residues 257-286 the composition is skewed to polar residues; the sequence is NVTEGVQPSSSNAARRTEASVLTSNATTAG. 2 consecutive WW domains span residues 294–319 and 351–376; these read WEQR…WVDP and WEMR…WDDP. The HECT domain maps to 463–767; the sequence is FLLSHEMFNP…VEETIGFGQE (305 aa). Catalysis depends on Cys735, which acts as the Glycyl thioester intermediate.

The protein localises to the membrane. The protein resides in the cytoplasm. The enzyme catalyses S-ubiquitinyl-[E2 ubiquitin-conjugating enzyme]-L-cysteine + [acceptor protein]-L-lysine = [E2 ubiquitin-conjugating enzyme]-L-cysteine + N(6)-ubiquitinyl-[acceptor protein]-L-lysine.. The protein operates within protein modification; protein ubiquitination. In terms of biological role, E3 ubiquitin-protein ligase which accepts ubiquitin from an E2 ubiquitin-conjugating enzyme in the form of a thioester and then directly transfers the ubiquitin to targeted substrates. Regulates ubiquitination of cdc25. This chain is E3 ubiquitin-protein ligase pub1 (pub1), found in Schizosaccharomyces pombe (strain 972 / ATCC 24843) (Fission yeast).